The following is a 368-amino-acid chain: Phosphotransferase IIC component GlvC (368 aa).

At 1-11 (MLSQIQRFGGA) the chain is on the periplasmic side. The PTS EIIC type-1 domain occupies 1–368 (MLSQIQRFGG…VGNMGGGLID (368 aa)). A helical transmembrane segment spans residues 12-32 (MFTPVLLFPFAGIVVGLAILL). At 33-59 (QNPMFVGESLTDPNSLFAQIVHIIEEG) the chain is on the cytoplasmic side. The chain crosses the membrane as a helical span at residues 60 to 80 (GWTVFRNMPLIFAVGLPIGLA). Topologically, residues 81–86 (KQAQGR) are periplasmic. A helical membrane pass occupies residues 87–107 (ACLAVMVSFLTWNYFINAMGM). Topologically, residues 108-129 (TWGSYFGVDFTQDAVAGSGLTM) are cytoplasmic. Residues 130 to 150 (MAGIKTLDTSIIGAIIISGIV) form a helical membrane-spanning segment. Topologically, residues 151–173 (TALHNRLFDKKLPVFLGIFQGTS) are periplasmic. Residues 174–194 (YVVIIAFLVMIPCAWLTLLGW) traverse the membrane as a helical segment. Residues 195–198 (PKVQ) lie on the Cytoplasmic side of the membrane. A helical transmembrane segment spans residues 199–221 (MGIESLQAFLRSAGALGVWVYTF). Residues 222 to 224 (LER) lie on the Periplasmic side of the membrane. A helical membrane pass occupies residues 225–245 (ILIPTGLHHFIYGQFIFGPAA). The Cytoplasmic segment spans residues 246-276 (VEGGIQMYWAQHLQEFSLSAEPLKSLFPEGG). Residues 277-297 (FALHGNSKIFGAVGISLAMYF) form a helical membrane-spanning segment. Topologically, residues 298–306 (TAAPENRVK) are periplasmic. Residues 307–327 (VAGLLIPATLTAMLVGITEPL) traverse the membrane as a helical segment. Position 328 (glutamate 328) is a topological domain, cytoplasmic. A helical membrane pass occupies residues 329–349 (FTFLFISPLLFAVHAVLAASM). The Periplasmic segment spans residues 350-368 (STVMYLFGVVGNMGGGLID).

It localises to the cell inner membrane. Functionally, the phosphoenolpyruvate-dependent sugar phosphotransferase system (PTS), a major carbohydrate active -transport system, catalyzes the phosphorylation of incoming sugar substrates concomitant with their translocation across the cell membrane. This operon may be cryptic in wild-type K12 strains. In Escherichia coli (strain K12), this protein is Phosphotransferase IIC component GlvC.